A 489-amino-acid chain; its full sequence is Lysine--tRNA ligase (489 aa).

E398 and E405 together coordinate Mg(2+).

The protein belongs to the class-II aminoacyl-tRNA synthetase family. In terms of assembly, homodimer. Mg(2+) serves as cofactor.

It is found in the cytoplasm. The catalysed reaction is tRNA(Lys) + L-lysine + ATP = L-lysyl-tRNA(Lys) + AMP + diphosphate. This chain is Lysine--tRNA ligase, found in Moorella thermoacetica (strain ATCC 39073 / JCM 9320).